The chain runs to 357 residues: D-alanine--D-alanine ligase (357 aa).

One can recognise an ATP-grasp domain in the interval 145–339; the sequence is KEVMLYHGIQ…YGDLVMDIVN (195 aa). 172–225 is a binding site for ATP; sequence PFDFPVVVKPTSGGSSVGTHIIHNQEELESGLEDVFRFDNSAIVEEFTPGREFS. Positions 294, 306, and 308 each coordinate Mg(2+).

Belongs to the D-alanine--D-alanine ligase family. It depends on Mg(2+) as a cofactor. Mn(2+) serves as cofactor.

The protein resides in the cytoplasm. The catalysed reaction is 2 D-alanine + ATP = D-alanyl-D-alanine + ADP + phosphate + H(+). The protein operates within cell wall biogenesis; peptidoglycan biosynthesis. Its function is as follows. Cell wall formation. This is D-alanine--D-alanine ligase from Lacticaseibacillus paracasei (strain ATCC 334 / BCRC 17002 / CCUG 31169 / CIP 107868 / KCTC 3260 / NRRL B-441) (Lactobacillus paracasei).